The primary structure comprises 401 residues: Argininosuccinate synthase (401 aa).

Residues 10-18 (AYSGGVDTS) and alanine 38 contribute to the ATP site. Tyrosine 89 provides a ligand contact to L-citrulline. Position 119 (glycine 119) interacts with ATP. L-aspartate-binding residues include threonine 121, asparagine 125, and aspartate 126. Asparagine 125 lines the L-citrulline pocket. Arginine 129, serine 177, serine 186, glutamate 262, and tyrosine 274 together coordinate L-citrulline.

It belongs to the argininosuccinate synthase family. Type 1 subfamily. As to quaternary structure, homotetramer.

It localises to the cytoplasm. The enzyme catalyses L-citrulline + L-aspartate + ATP = 2-(N(omega)-L-arginino)succinate + AMP + diphosphate + H(+). It functions in the pathway amino-acid biosynthesis; L-arginine biosynthesis; L-arginine from L-ornithine and carbamoyl phosphate: step 2/3. The protein is Argininosuccinate synthase of Prochlorococcus marinus (strain MIT 9313).